The primary structure comprises 127 residues: C-C motif chemokine 28 (127 aa).

An N-terminal signal peptide occupies residues 1–19 (MQQRGLAIVALAVCAALHA). 2 disulfide bridges follow: Cys30/Cys58 and Cys31/Cys73. An N-linked (GlcNAc...) asparagine glycan is attached at Asn78. Positions 92–115 (KNGKGNVCHRKKHHGKRNSNRAHQ) are enriched in basic residues. Residues 92 to 127 (KNGKGNVCHRKKHHGKRNSNRAHQGKHETYGHKTPY) form a disordered region. Residues 116-127 (GKHETYGHKTPY) show a composition bias toward basic and acidic residues.

This sequence belongs to the intercrine beta (chemokine CC) family. In terms of tissue distribution, preferentially expressed by epithelial cells of diverse tissues including normal and pathological colon, salivary gland, mammary gland, trachea and rectum. Also found in prostate, spleen, thyroid, psoriasis skin and in lower levels in peripheral blood leukocytes, small intestine, Peyer patches, stomach and normal skin.

Its subcellular location is the secreted. Chemotactic activity for resting CD4, CD8 T-cells and eosinophils. Binds to CCR3 and CCR10 and induces calcium mobilization in a dose-dependent manner. This is C-C motif chemokine 28 (CCL28) from Homo sapiens (Human).